We begin with the raw amino-acid sequence, 100 residues long: HssA/B-like protein 37 (100 aa).

2 disordered regions span residues 1–29 and 67–100; these read MTLFSSISSMSTSMSGSKSSIASFGSGTS and RSRGSCGGNRGNGNGNGGMGGGNGSCCGGPCCGI. The segment covering 71-93 has biased composition (gly residues); it reads SCGGNRGNGNGNGGMGGGNGSCC.

The protein belongs to the hssA/B family.

In Dictyostelium discoideum (Social amoeba), this protein is HssA/B-like protein 37 (hssl37).